A 142-amino-acid chain; its full sequence is Succinate dehydrogenase subunit 6, mitochondrial (142 aa).

Component of complex II composed of eight subunits in plants: four classical SDH subunits SDH1, SDH2, SDH3 and SDH4 (a flavoprotein (FP), an iron-sulfur protein (IP), and a cytochrome b composed of a large and a small subunit.), as well as four subunits unknown in mitochondria from bacteria and heterotrophic eukaryotes.

The protein localises to the mitochondrion inner membrane. It functions in the pathway carbohydrate metabolism; tricarboxylic acid cycle. The polypeptide is Succinate dehydrogenase subunit 6, mitochondrial (Oryza sativa subsp. japonica (Rice)).